Here is a 353-residue protein sequence, read N- to C-terminus: Alanine racemase (353 aa).

Lysine 33 acts as the Proton acceptor; specific for D-alanine in catalysis. An N6-(pyridoxal phosphate)lysine modification is found at lysine 33. Arginine 129 serves as a coordination point for substrate. The active-site Proton acceptor; specific for L-alanine is the tyrosine 250. Methionine 298 lines the substrate pocket.

Belongs to the alanine racemase family. Pyridoxal 5'-phosphate serves as cofactor.

It carries out the reaction L-alanine = D-alanine. It participates in amino-acid biosynthesis; D-alanine biosynthesis; D-alanine from L-alanine: step 1/1. In terms of biological role, catalyzes the interconversion of L-alanine and D-alanine. May also act on other amino acids. The protein is Alanine racemase (alr) of Azoarcus sp. (strain BH72).